Here is a 132-residue protein sequence, read N- to C-terminus: MELEYPDDLRYLDSHEYIRLDGEIATIGLSAHAIDELGDIVFLELPEEGDAIVVGETFGSIESVKAVEDLYAPISGTVIDRNEALIQSPEMVSEDPYEEGWFIKVRVDNLDDEMLAETMTAEEYRLQVAGEE.

The region spanning 24–106 is the Lipoyl-binding domain; sequence IATIGLSAHA…YEEGWFIKVR (83 aa). Lys-65 carries the N6-lipoyllysine modification.

It belongs to the GcvH family. As to quaternary structure, the glycine cleavage system is composed of four proteins: P, T, L and H. (R)-lipoate is required as a cofactor.

Its function is as follows. The glycine cleavage system catalyzes the degradation of glycine. The H protein shuttles the methylamine group of glycine from the P protein to the T protein. This chain is Glycine cleavage system H protein, found in Picosynechococcus sp. (strain ATCC 27264 / PCC 7002 / PR-6) (Agmenellum quadruplicatum).